The primary structure comprises 71 residues: Conotoxin Tx11.3 (71 aa).

The N-terminal stretch at 1–19 (MKLCVTFLLVLVILPSVTG) is a signal peptide. Residues 20 to 47 (VKSSERTLSGAALRGDRGTCSGRGQECK) constitute a propeptide that is removed on maturation. Intrachain disulfides connect C39–C53, C46–C58, C52–C63, and C57–C70.

This sequence belongs to the I1 superfamily. As to expression, expressed by the venom duct.

Its subcellular location is the secreted. The polypeptide is Conotoxin Tx11.3 (Conus textile (Cloth-of-gold cone)).